A 267-amino-acid polypeptide reads, in one-letter code: Ribosomal RNA small subunit methyltransferase NEP1 (267 aa).

Residues 1-46 form a disordered region; the sequence is MSELKNGTTEPKKNETTQSDSKSKSTSTNKSSVPPASLVPVQPTAL. A compositionally biased stretch (low complexity) spans 16 to 32; it reads TTQSDSKSKSTSTNKSS. S-adenosyl-L-methionine is bound by residues Leu-195, Gly-222, 227–229, and 242–247; these read GKD and LSDYPL.

Belongs to the class IV-like SAM-binding methyltransferase superfamily. RNA methyltransferase NEP1 family. In terms of assembly, homodimer.

The protein resides in the nucleus. It localises to the nucleolus. It carries out the reaction a pseudouridine in rRNA + S-adenosyl-L-methionine = an N(1)-methylpseudouridine in rRNA + S-adenosyl-L-homocysteine + H(+). Functionally, S-adenosyl-L-methionine-dependent pseudouridine N(1)-methyltransferase that methylates the pseudouridine corresponding to position 1189 (Psi1189) in S.cerevisiae 18S rRNA. Involved the biosynthesis of the hypermodified N1-methyl-N3-(3-amino-3-carboxypropyl) pseudouridine (m1acp3-Psi) conserved in eukaryotic 18S rRNA. Also has an essential role in 40S ribosomal subunit biogenesis independent on its methyltransferase activity, facilitating the incorporation of ribosomal protein S19 during the formation of pre-ribosomes. The polypeptide is Ribosomal RNA small subunit methyltransferase NEP1 (Candida albicans (Yeast)).